The sequence spans 636 residues: 1-deoxy-D-xylulose-5-phosphate synthase (636 aa).

Residues His-77 and 118 to 120 (GHS) each bind thiamine diphosphate. Residue Asp-149 coordinates Mg(2+). Thiamine diphosphate is bound by residues 150–151 (GA), Asn-178, Tyr-290, and Glu-375. Asn-178 is a binding site for Mg(2+).

It belongs to the transketolase family. DXPS subfamily. In terms of assembly, homodimer. The cofactor is Mg(2+). Requires thiamine diphosphate as cofactor.

The catalysed reaction is D-glyceraldehyde 3-phosphate + pyruvate + H(+) = 1-deoxy-D-xylulose 5-phosphate + CO2. It functions in the pathway metabolic intermediate biosynthesis; 1-deoxy-D-xylulose 5-phosphate biosynthesis; 1-deoxy-D-xylulose 5-phosphate from D-glyceraldehyde 3-phosphate and pyruvate: step 1/1. Its function is as follows. Catalyzes the acyloin condensation reaction between C atoms 2 and 3 of pyruvate and glyceraldehyde 3-phosphate to yield 1-deoxy-D-xylulose-5-phosphate (DXP). The sequence is that of 1-deoxy-D-xylulose-5-phosphate synthase from Cytophaga hutchinsonii (strain ATCC 33406 / DSM 1761 / CIP 103989 / NBRC 15051 / NCIMB 9469 / D465).